The primary structure comprises 377 residues: Probable pectin lyase D (377 aa).

A signal peptide spans 1 to 17 (MRVSAFALLAAAATAAA). 2 cysteine pairs are disulfide-bonded: Cys80/Cys99 and Cys89/Cys223. A glycan (N-linked (GlcNAc...) asparagine) is linked at Asn126. The active site involves Arg253. Cysteines 321 and 329 form a disulfide.

This sequence belongs to the polysaccharide lyase 1 family.

It localises to the secreted. It carries out the reaction Eliminative cleavage of (1-&gt;4)-alpha-D-galacturonan methyl ester to give oligosaccharides with 4-deoxy-6-O-methyl-alpha-D-galact-4-enuronosyl groups at their non-reducing ends.. Functionally, pectinolytic enzymes consist of four classes of enzymes: pectin lyase, polygalacturonase, pectin methylesterase and rhamnogalacturonase. Among pectinolytic enzymes, pectin lyase is the most important in depolymerization of pectin, since it cleaves internal glycosidic bonds of highly methylated pectins. The polypeptide is Probable pectin lyase D (pelD) (Emericella nidulans (strain FGSC A4 / ATCC 38163 / CBS 112.46 / NRRL 194 / M139) (Aspergillus nidulans)).